A 318-amino-acid chain; its full sequence is Ubiquitin-like domain-containing CTD phosphatase 1 (318 aa).

Residue alanine 2 is modified to N-acetylalanine. Residues 3-81 (LPIIVKWGGQ…IMMMGTREES (79 aa)) form the Ubiquitin-like domain. The residue at position 117 (lysine 117) is an N6-acetyllysine. The 162-residue stretch at 133–294 (PREGKKLLVL…LKLTQYLKEI (162 aa)) folds into the FCP1 homology domain. Positions 143, 145, and 253 each coordinate Mg(2+).

It depends on Mg(2+) as a cofactor.

The protein localises to the nucleus. The enzyme catalyses O-phospho-L-seryl-[protein] + H2O = L-seryl-[protein] + phosphate. It carries out the reaction O-phospho-L-threonyl-[protein] + H2O = L-threonyl-[protein] + phosphate. Functionally, dephosphorylates 26S nuclear proteasomes, thereby decreasing their proteolytic activity. Recruited to the 19S regulatory particle of the 26S proteasome through its interaction with 19S component PSMD2/RPN1. Once recruited, dephosphorylates 19S component PSMC2/RPT1 which impairs PSMC2 ATPase activity and disrupts 26S proteasome assembly. Has also been reported to stimulate the proteolytic activity of the 26S proteasome. The sequence is that of Ubiquitin-like domain-containing CTD phosphatase 1 (UBLCP1) from Pongo abelii (Sumatran orangutan).